The sequence spans 393 residues: MMLNGERIISKPLRWAMVGGGRLSQVGYKHRIGALRDNTAFQLTAGAFDIDAERGKDFGVNLGVDAERCYPNYQTMFAEEAKRQDGIEVVSIATPNGTHYEICKAALEAGVHVICEKPLFFTSAEGQEIKALAEKKGKIVGVTYGFSGNQMLLQMRAMIEQGMIGDIRVVDLQYTHGFCATDEGEKISAAQKWRVDPAIAGPSFVLGDLSTHTYYMSQLIMPKMKIKELLCDRQSFVGSRAPLEDNAHVLMHYENGAVGTMWTSSINAGCMDGHRIRIVGSKASIEWWDSKPNELTYEVQGEPGQTLVRGMPYLDDVCNADERLGALHSEGLSEAWANIYLKFAIAIDAKNREDEEILNNLVYPDIDAGIEGIRWIENCVRSANQGSVWVEFK.

The protein belongs to the Gfo/Idh/MocA family.

This is an uncharacterized protein from Bacillus subtilis (strain 168).